The sequence spans 499 residues: Ribose import ATP-binding protein RbsA (499 aa).

ABC transporter domains are found at residues 3–240 and 250–494; these read VEMT…VGRA and LTPG…TGGD. An ATP-binding site is contributed by 35-42; the sequence is GENGAGKS.

Belongs to the ABC transporter superfamily. Ribose importer (TC 3.A.1.2.1) family. In terms of assembly, the complex is composed of an ATP-binding protein (RbsA), two transmembrane proteins (RbsC) and a solute-binding protein (RbsB).

The protein localises to the cell membrane. The catalysed reaction is D-ribose(out) + ATP + H2O = D-ribose(in) + ADP + phosphate + H(+). Functionally, part of the ABC transporter complex RbsABC involved in ribose import. Responsible for energy coupling to the transport system. The polypeptide is Ribose import ATP-binding protein RbsA (Halalkalibacterium halodurans (strain ATCC BAA-125 / DSM 18197 / FERM 7344 / JCM 9153 / C-125) (Bacillus halodurans)).